A 299-amino-acid chain; its full sequence is 33 kDa chaperonin (299 aa).

Cystine bridges form between Cys-234–Cys-236 and Cys-268–Cys-271.

The protein belongs to the HSP33 family. Under oxidizing conditions two disulfide bonds are formed involving the reactive cysteines. Under reducing conditions zinc is bound to the reactive cysteines and the protein is inactive.

It is found in the cytoplasm. Redox regulated molecular chaperone. Protects both thermally unfolding and oxidatively damaged proteins from irreversible aggregation. Plays an important role in the bacterial defense system toward oxidative stress. This chain is 33 kDa chaperonin, found in Pseudomonas putida (strain ATCC 700007 / DSM 6899 / JCM 31910 / BCRC 17059 / LMG 24140 / F1).